Here is a 454-residue protein sequence, read N- to C-terminus: GTPase Der (454 aa).

EngA-type G domains are found at residues 4–167 and 188–363; these read AIVA…SEDK and LQLA…ASWQ. GTP contacts are provided by residues 10 to 17, 56 to 60, 121 to 124, 194 to 201, 241 to 245, and 306 to 309; these read GKPNVGKS, DTPGL, NKTE, GRPNCGKS, DTAGV, and NKCD. Residues 364-450 enclose the KH-like domain; sequence KRVTTGTLNQ…PVRLSFVKGK (87 aa).

It belongs to the TRAFAC class TrmE-Era-EngA-EngB-Septin-like GTPase superfamily. EngA (Der) GTPase family. In terms of assembly, associates with the 50S ribosomal subunit.

In terms of biological role, GTPase that plays an essential role in the late steps of ribosome biogenesis. The polypeptide is GTPase Der (Orientia tsutsugamushi (strain Boryong) (Rickettsia tsutsugamushi)).